A 376-amino-acid chain; its full sequence is 26S proteasome non-ATPase regulatory subunit 13 (376 aa).

The 168-residue stretch at 171–338 folds into the PCI domain; it reads SYYKDALRFL…KRVHMTWVQP (168 aa).

Belongs to the proteasome subunit S11 family. Component of the 19S proteasome regulatory particle complex. The 26S proteasome consists of a 20S core particle (CP) and two 19S regulatory subunits (RP). The regulatory particle is made of a lid composed of 9 subunits including PSMD13, a base containing 6 ATPases and few additional components.

Component of the 26S proteasome, a multiprotein complex involved in the ATP-dependent degradation of ubiquitinated proteins. This complex plays a key role in the maintenance of protein homeostasis by removing misfolded or damaged proteins, which could impair cellular functions, and by removing proteins whose functions are no longer required. Therefore, the proteasome participates in numerous cellular processes, including cell cycle progression, apoptosis, or DNA damage repair. This Bos taurus (Bovine) protein is 26S proteasome non-ATPase regulatory subunit 13 (PSMD13).